The sequence spans 415 residues: Imidazolonepropionase (415 aa).

Fe(3+)-binding residues include His-75 and His-77. The Zn(2+) site is built by His-75 and His-77. 4-imidazolone-5-propanoate is bound by residues Arg-84, Tyr-147, and His-180. Tyr-147 lines the N-formimidoyl-L-glutamate pocket. His-245 is a Fe(3+) binding site. His-245 is a Zn(2+) binding site. A 4-imidazolone-5-propanoate-binding site is contributed by Gln-248. Asp-320 is a binding site for Fe(3+). Zn(2+) is bound at residue Asp-320. N-formimidoyl-L-glutamate-binding residues include Asn-322 and Gly-324. Thr-325 contacts 4-imidazolone-5-propanoate.

Belongs to the metallo-dependent hydrolases superfamily. HutI family. It depends on Zn(2+) as a cofactor. Fe(3+) is required as a cofactor.

It is found in the cytoplasm. It carries out the reaction 4-imidazolone-5-propanoate + H2O = N-formimidoyl-L-glutamate. It functions in the pathway amino-acid degradation; L-histidine degradation into L-glutamate; N-formimidoyl-L-glutamate from L-histidine: step 3/3. In terms of biological role, catalyzes the hydrolytic cleavage of the carbon-nitrogen bond in imidazolone-5-propanoate to yield N-formimidoyl-L-glutamate. It is the third step in the universal histidine degradation pathway. In Photorhabdus laumondii subsp. laumondii (strain DSM 15139 / CIP 105565 / TT01) (Photorhabdus luminescens subsp. laumondii), this protein is Imidazolonepropionase.